Consider the following 1745-residue polypeptide: MVDFPYSSAPLRTIKEVQFGLFSPEEVRAISVAKIEFPETMDETQMRAKVGGLNDPRLGSIDRNFKCQTCGEGMNDCPGHFGHIELAKPVFHIGFISKIKKVCECVCMHCGKLLLDEYNELMRQAIKIKDPKRRFNAVWSLCKAKMVCDTEVPSEDDPSKYISRGGCGNAQPSIRKDGLSLVGTWKKDKNAEDADQPEKRIISAEEILNVFKHISPEDSWRLGFNEDFSRPEWMLLTVLPVPPPPVRPSISFNESQRGEDDLTYKLGDILKANINVQRLEINGSPQHVIQESESLLQFHVATYMDNDIAGQPQAVQKSGRPIKSIRARLKGKEGRIRGNLMGKRVDFSARTVISGDPNLDLDQVGVPKSIAKTLTYPEVVTPYNIDRLTQLVRNGPNEHPGAKYVIRDNGDRIDLRYSKRAGDIQLQYGWKVERHIMDDDPVLFNRQPSLHKMSMMAHRVKVMPYSTFRLNLSVTSPYNADFDGDEMNLHVPQSEETRAELSQLCAVPLQIVSPQSNKPCMGIVQDTLCGIRKMTLRDTFIELDQVLNMLYWIPDWDGVIPTPTILKPKPLWSGKQLLSMAIPSGIHLQRFDEGTTYLSPKDNGMLIIDGQIIFGVVDKKTVGSSSGGLIHVVTREKGPEVCAKLFGNIQKVVNYWLLHNGFSIGIGDTIADEKTMREITDAIALAKKKVEEVTKEAQANLLTAKHGMTLRESFEDNVVRYLNEARDKAGRSAEVNLKDLNNVKQMVSAGSKGSFINIAQMSACVGQQSVEGKRIAFGFADRTLPHFSKDDYSPESKGFVENSYLRGLTPQEFFFHAMGGREGLIDTAVKTAETGYIQRRLVKALEDIMVHYDGTTRNSLGNIIQFVYGEDGMDAAHIEKQSIDTIPGSDLAFEKRYRIDLLNPNYALDPNLLESGTEIVGDLKLQNLLDEEYKQLVQDRHFLRKIFMDGEHNWPLPVNIRRIIQNAQQTFRIDSTKPTDLSIQDVVQGVRGLQERLLVLRGKSQILQEAQENAITLFCCLLRSRLATRRVITEYRLTKQTFEWVLNNIEAQFLRSIVHPGEMVGVLAAQSIGEPATQMTLNTFHFAGVASKKVTSGVPRLKEILNVAKNMKTPSLTVYLEESYATDQEKAKLIRSAIEHTTLKSVTVASEIYYDPDPSSTVIEEDEEIIQLHFSLMDEETEASLKHQSPWLLRLELDRVAMTDKDLTMGQVGEKIKETFKNDLFVIWSEDNAEKLIIRCRVVRDPKTLDAEAEAEEDHMLKKIENTMLESITLRGVQDITRVVMMKYDRKVPSETGEYHKIPEWVLETDGVNLSEVMSVPGVDPTRIYTNSFIDIMNVLGIEAGRAALYKEVYNVIASDGSYVNYRHMALLVDVMTSQGFLMSVTRHGFNRADTGALMRCSFEETVEILFEAGAAAELDDCSGVSENVILGQMAPIGTGSFDVMIDDESLIKYMPEQKLSTAVEVNDGGATPYNSDAGLVNTKVDIKDELMFSPLVEAGTSDAIASGGFTAYGGADYGGATSPFSGYGNGPTSPGFGDVSSPGFSPTSPAYSPTSPSYSPTSPSYSPTSPSYSPTSPSYSPTSPSYSPTSPSYSPTSPSYSPTSPSYSPTSPSYSPTSPSYSPTSPSYSPTSPSYSPTSPSYSPTSPSYSPTSPSYSPTSPSYSPTSPSYSPTSPSYSPTSPSYSPTSPSYSPTSPSYSPTSPSYSPTSPSYSPTSPQYSPRSPSYSPSFNNNDKEQKDENGTH.

C67, C70, C77, H80, C107, C110, C148, and C167 together coordinate Zn(2+). Residues D481, D483, and D485 each coordinate Mg(2+). A bridging helix region spans residues 810-822 (PQEFFFHAMGGRE). K1247 is covalently cross-linked (Glycyl lysine isopeptide (Lys-Gly) (interchain with G-Cter in ubiquitin)). A disordered region spans residues 1530-1745 (NGPTSPGFGD…KEQKDENGTH (216 aa)). Over residues 1546-1730 (SPTSPAYSPT…SPRSPSYSPS (185 aa)) the composition is skewed to low complexity. A run of 24 repeats spans residues 1552 to 1558 (YSPTSPS), 1559 to 1565 (YSPTSPS), 1566 to 1572 (YSPTSPS), 1573 to 1579 (YSPTSPS), 1580 to 1586 (YSPTSPS), 1587 to 1593 (YSPTSPS), 1594 to 1600 (YSPTSPS), 1601 to 1607 (YSPTSPS), 1608 to 1614 (YSPTSPS), 1615 to 1621 (YSPTSPS), 1622 to 1628 (YSPTSPS), 1629 to 1635 (YSPTSPS), 1636 to 1642 (YSPTSPS), 1643 to 1649 (YSPTSPS), 1650 to 1656 (YSPTSPS), 1657 to 1663 (YSPTSPS), 1664 to 1670 (YSPTSPS), 1671 to 1677 (YSPTSPS), 1678 to 1684 (YSPTSPS), 1685 to 1691 (YSPTSPS), 1692 to 1698 (YSPTSPS), 1699 to 1705 (YSPTSPS), 1706 to 1712 (YSPTSPS), and 1713 to 1719 (YSPTSPQ). The C-terminal domain (CTD); 25 X 7 AA approximate tandem repeats of Y-S-P-T-S-P-[TSAN] stretch occupies residues 1552–1726 (YSPTSPSYSP…SPQYSPRSPS (175 aa)). The stretch at 1720–1726 (YSPRSPS) is one 25; approximate repeat. The span at 1734-1745 (NDKEQKDENGTH) shows a compositional bias: basic and acidic residues.

The protein belongs to the RNA polymerase beta' chain family. In terms of assembly, component of the RNA polymerase II (Pol II) complex consisting of 12 subunits. The tandem 7 residues repeats in the C-terminal domain (CTD) can be highly phosphorylated. The phosphorylation activates Pol II. Phosphorylation occurs mainly at residues 'Ser-2' and 'Ser-5' of the heptapeptide repeat. The phosphorylation state is believed to result from the balanced action of site-specific CTD kinases and phosphatase, and a 'CTD code' that specifies the position of Pol II within the transcription cycle has been proposed. Post-translationally, following transcription stress, the elongating form of RNA polymerase II (RNA pol IIo) is polyubiquitinated via 'Lys-63'-linkages on Lys-1247 at DNA damage sites without leading to degradation: ubiquitination promotes RNA pol IIo backtracking to allow access by the transcription-coupled nucleotide excision repair (TC-NER) machinery. Subsequent DEF1-dependent polyubiquitination by the elongin complex via 'Lys-48'-linkages may lead to proteasome-mediated degradation; presumably at stalled RNA pol II where TC-NER has failed, to halt global transcription and enable 'last resort' DNA repair pathways.

It localises to the nucleus. It carries out the reaction RNA(n) + a ribonucleoside 5'-triphosphate = RNA(n+1) + diphosphate. DNA-dependent RNA polymerase catalyzes the transcription of DNA into RNA using the four ribonucleoside triphosphates as substrates. Largest and catalytic component of RNA polymerase II which synthesizes mRNA precursors and many functional non-coding RNAs. Forms the polymerase active center together with the second largest subunit. Pol II is the central component of the basal RNA polymerase II transcription machinery. It is composed of mobile elements that move relative to each other. RPB1 is part of the core element with the central large cleft, the clamp element that moves to open and close the cleft and the jaws that are thought to grab the incoming DNA template. At the start of transcription, a single-stranded DNA template strand of the promoter is positioned within the central active site cleft of Pol II. A bridging helix emanates from RPB1 and crosses the cleft near the catalytic site and is thought to promote translocation of Pol II by acting as a ratchet that moves the RNA-DNA hybrid through the active site by switching from straight to bent conformations at each step of nucleotide addition. During transcription elongation, Pol II moves on the template as the transcript elongates. Elongation is influenced by the phosphorylation status of the C-terminal domain (CTD) of Pol II largest subunit (RPB1), which serves as a platform for assembly of factors that regulate transcription initiation, elongation, termination and mRNA processing. The sequence is that of DNA-directed RNA polymerase II subunit RPB1 (RPB1) from Eremothecium gossypii (strain ATCC 10895 / CBS 109.51 / FGSC 9923 / NRRL Y-1056) (Yeast).